The sequence spans 668 residues: Ubiquitin ligase complex F-box protein UFO1 (668 aa).

The region spanning 5-51 is the F-box domain; the sequence is GLVLQDLPPEILINIFSHLDEKDLFTLQELSTHFRNLIHDEELWKNL. Phosphoserine is present on Ser511. At Thr514 the chain carries Phosphothreonine. UIM domains lie at 547–566, 583–602, and 651–668; these read DEDEQLRRALEESQLIYETQ, EDDEEFLRAIRQSRVEDERR, and NVDEDLQLAIALSLSEIN. Over residues 564–578 the composition is skewed to polar residues; sequence ETQTNSSANHGNNTN. Disordered stretches follow at residues 564-585 and 599-639; these read ETQTNSSANHGNNTNDEIDEDD and DERR…TENT.

As to quaternary structure, interacts with SKP1. Component of the probable SCF(UFO1) complex containing CDC53, SKP1, RBX1 and UFO1.

Its pathway is protein modification; protein ubiquitination. Its function is as follows. Substrate recognition component of a SCF (SKP1-CUL1-F-box protein) E3 ubiquitin-protein ligase complex which mediates the ubiquitination and subsequent proteasomal degradation of target proteins. Probably recognizes and binds to phosphorylated target proteins. This is Ubiquitin ligase complex F-box protein UFO1 (UFO1) from Saccharomyces cerevisiae (strain ATCC 204508 / S288c) (Baker's yeast).